A 123-amino-acid polypeptide reads, in one-letter code: Small ribosomal subunit protein uS12 (123 aa).

A disordered region spans residues 1–32 (MPTIQQLVRKGRKDKKAKVKTAALKGSPQRRG). The segment covering 9-19 (RKGRKDKKAKV) has biased composition (basic residues). Residue D89 is modified to 3-methylthioaspartic acid.

The protein belongs to the universal ribosomal protein uS12 family. As to quaternary structure, part of the 30S ribosomal subunit. Contacts proteins S8 and S17. May interact with IF1 in the 30S initiation complex.

Its function is as follows. With S4 and S5 plays an important role in translational accuracy. Interacts with and stabilizes bases of the 16S rRNA that are involved in tRNA selection in the A site and with the mRNA backbone. Located at the interface of the 30S and 50S subunits, it traverses the body of the 30S subunit contacting proteins on the other side and probably holding the rRNA structure together. The combined cluster of proteins S8, S12 and S17 appears to hold together the shoulder and platform of the 30S subunit. The protein is Small ribosomal subunit protein uS12 of Corynebacterium kroppenstedtii (strain DSM 44385 / JCM 11950 / CIP 105744 / CCUG 35717).